A 337-amino-acid polypeptide reads, in one-letter code: Holliday junction branch migration complex subunit RuvB (337 aa).

The segment at 1-182 (MEDRMVSASY…FGVLSAMEFY (182 aa)) is large ATPase domain (RuvB-L). Residues L21, R22, G63, K66, T67, T68, R172, Y182, and R219 each coordinate ATP. T67 provides a ligand contact to Mg(2+). The interval 183 to 253 (NEDELKEIIL…IAKNALSLLE (71 aa)) is small ATPAse domain (RuvB-S). The segment at 256 to 337 (GEGFDKIDNK…REFKEQTKLT (82 aa)) is head domain (RuvB-H). Residues R311 and R316 each contribute to the DNA site.

It belongs to the RuvB family. As to quaternary structure, homohexamer. Forms an RuvA(8)-RuvB(12)-Holliday junction (HJ) complex. HJ DNA is sandwiched between 2 RuvA tetramers; dsDNA enters through RuvA and exits via RuvB. An RuvB hexamer assembles on each DNA strand where it exits the tetramer. Each RuvB hexamer is contacted by two RuvA subunits (via domain III) on 2 adjacent RuvB subunits; this complex drives branch migration. In the full resolvosome a probable DNA-RuvA(4)-RuvB(12)-RuvC(2) complex forms which resolves the HJ.

It is found in the cytoplasm. The catalysed reaction is ATP + H2O = ADP + phosphate + H(+). In terms of biological role, the RuvA-RuvB-RuvC complex processes Holliday junction (HJ) DNA during genetic recombination and DNA repair, while the RuvA-RuvB complex plays an important role in the rescue of blocked DNA replication forks via replication fork reversal (RFR). RuvA specifically binds to HJ cruciform DNA, conferring on it an open structure. The RuvB hexamer acts as an ATP-dependent pump, pulling dsDNA into and through the RuvAB complex. RuvB forms 2 homohexamers on either side of HJ DNA bound by 1 or 2 RuvA tetramers; 4 subunits per hexamer contact DNA at a time. Coordinated motions by a converter formed by DNA-disengaged RuvB subunits stimulates ATP hydrolysis and nucleotide exchange. Immobilization of the converter enables RuvB to convert the ATP-contained energy into a lever motion, pulling 2 nucleotides of DNA out of the RuvA tetramer per ATP hydrolyzed, thus driving DNA branch migration. The RuvB motors rotate together with the DNA substrate, which together with the progressing nucleotide cycle form the mechanistic basis for DNA recombination by continuous HJ branch migration. Branch migration allows RuvC to scan DNA until it finds its consensus sequence, where it cleaves and resolves cruciform DNA. This Clostridium novyi (strain NT) protein is Holliday junction branch migration complex subunit RuvB.